Consider the following 510-residue polypeptide: DNA nucleotidylexotransferase (510 aa).

The Nuclear localization signal signature appears at 11–17 (PRRKQPK). The region spanning 27-124 (KYDIKFKDIA…QPVEIERKHR (98 aa)) is the BRCT domain. The interval 254–258 (VGLRT) is involved in DNA binding. A 2'-deoxyribonucleoside 5'-triphosphate-binding positions include 329 to 334 (GFRRGN) and 338 to 341 (HDVD). The Mg(2+) site is built by Asp339, Asp341, and Asp434. Residue 449 to 450 (GW) participates in a 2'-deoxyribonucleoside 5'-triphosphate binding.

This sequence belongs to the DNA polymerase type-X family. The cofactor is Mg(2+).

The protein localises to the nucleus. The catalysed reaction is DNA(n) + a 2'-deoxyribonucleoside 5'-triphosphate = DNA(n+1) + diphosphate. In terms of biological role, template-independent DNA polymerase which catalyzes the random addition of deoxynucleoside 5'-triphosphate to the 3'-end of a DNA initiator. One of the in vivo functions of this enzyme is the addition of nucleotides at the junction (N region) of rearranged Ig heavy chain and T-cell receptor gene segments during the maturation of B- and T-cells. The protein is DNA nucleotidylexotransferase (DNTT) of Ambystoma mexicanum (Axolotl).